We begin with the raw amino-acid sequence, 324 residues long: MKRNIAIVAGGDTSEIVVSLRSAQGIYSFIDKEKYNLYIVEMEGRRWEVQLPDGSKTPVDRNDFSFINGAEKVVFDFAYITIHGTPGEDGRLQGYFDMMRIPYSCCGVLAAAITYDKFVCNQYLKAFGVRISESLLLRQGQAVSDEDVVEKIGLPCFIKPNLGGSSFGVTKVKTREQIQPAIAKAFSEAEEVMIEAFMGGTELTCGCYKTKEKSVVFPLTEVVTHNEFFDYDAKYNGQVDEITPARISEELTRRVQTLTSAIYDILGCSGIIRVDYIITEGEKINLLEVNTTPGMTATSFIPQQVRAAGLDIKDVMTDIIENKF.

One can recognise an ATP-grasp domain in the interval 121–321; that stretch reads NQYLKAFGVR…IKDVMTDIIE (201 aa). 149 to 204 lines the ATP pocket; it reads VEKIGLPCFIKPNLGGSSFGVTKVKTREQIQPAIAKAFSEAEEVMIEAFMGGTELT. Mg(2+)-binding residues include Asp-275, Glu-288, and Asn-290.

The protein belongs to the D-alanine--D-alanine ligase family. Mg(2+) serves as cofactor. Requires Mn(2+) as cofactor.

It is found in the cytoplasm. The catalysed reaction is 2 D-alanine + ATP = D-alanyl-D-alanine + ADP + phosphate + H(+). The protein operates within cell wall biogenesis; peptidoglycan biosynthesis. Cell wall formation. The sequence is that of D-alanine--D-alanine ligase from Bacteroides fragilis (strain YCH46).